A 348-amino-acid polypeptide reads, in one-letter code: Trace amine-associated receptor 9 (348 aa).

Residues 1 to 33 (MTSDFSPEPPMELCYENVNGSCIKSSYAPWPRA) are Extracellular-facing. N19 carries N-linked (GlcNAc...) asparagine glycosylation. 2 cysteine pairs are disulfide-bonded: C22/C186 and C105/C190. The chain crosses the membrane as a helical span at residues 34-58 (ILYGVLGLGALLAVFGNLLVIIAIL). Over 59–68 (HFKQLHTPTN) the chain is Cytoplasmic. The chain crosses the membrane as a helical span at residues 69-90 (FLVASLACADFLVGVTVMPFST). The Extracellular segment spans residues 91–105 (VRSVESCWYFGESYC). Residues 106-128 (KFHTCFDTSFCFASLFHLCCISI) traverse the membrane as a helical segment. Spermidine is bound by residues D112 and T113. At 129-148 (DRYIAVTDPLTYPTKFTVSV) the chain is on the cytoplasmic side. The chain crosses the membrane as a helical span at residues 149–170 (SGLCIALSWFFSVTYSFSIFYT). Topologically, residues 171 to 196 (GANEEGIEELVVALTCVGGCQAPLNQ) are extracellular. Residues 174-187 (EEGIEELVVALTCV) are extracellular Loop 2 (ECL2). A helical membrane pass occupies residues 197 to 218 (NWVLLCFLLFFLPTVVMVFLYG). Over 219 to 256 (RIFLVAKYQARKIEGTANQAQASSESYKERVAKRERKA) the chain is Cytoplasmic. Residues 257 to 280 (AKTLGIAMAAFLVSWLPYIIDAVI) form a helical membrane-spanning segment. Residues 281–293 (DAYMNFITPAYVY) are Extracellular-facing. The chain crosses the membrane as a helical span at residues 294 to 314 (EILVWCVYYNSAMNPLIYAFF). Over 315-348 (YPWFRKAIKLIVSGKVFRADSSTTNLFSEEAGAG) the chain is Cytoplasmic.

Belongs to the G-protein coupled receptor 1 family. As to expression, specifically expressed in neurons of the olfactory epithelium.

The protein localises to the cell membrane. In terms of biological role, olfactory receptor specific for trace amines, such as triethylamine, N,N-dimethylcyclohexylamine (DMCHA), beta-phenylethylamine (beta-PEA), cadaverine (CAD) and polyamines such as spermine and spermidine. Trace amine compounds are enriched in animal body fluids and act on trace amine-associated receptors (TAARs) to elicit both intraspecific and interspecific innate behaviors. Trace amine-binding causes a conformation change that triggers signaling via G(s)-class of G alpha proteins (GNAL or GNAS). In mature olfactory sensory neurons, Taar9 is coupled with GNAL/G(olf)G alpha protein and mediates activation of adenylate cyclase activity to activate cAMP signaling and eventually transmit odorant signals to achieve membrane depolarization. In immature olfactory sensory neurons, Taar9 is coupled with GNAS/G(s) G alpha proteins. This Mus musculus (Mouse) protein is Trace amine-associated receptor 9.